The following is a 248-amino-acid chain: Clathrin light chain A (248 aa).

Residues 1–92 (MAELDPFGAP…YYQESNGPTD (92 aa)) are disordered. Gly residues predominate over residues 13-25 (APGGPALGNGVAG). The span at 61–71 (GPQPHGEPPGG) shows a compositional bias: pro residues. The involved in binding clathrin heavy chain stretch occupies residues 100–162 (VDRLQSEPES…QLQKTKANNR (63 aa)). S105 and S206 each carry phosphoserine. K223 carries the N6-acetyllysine modification. Phosphoserine is present on S236. K242 is modified (N6-acetyllysine).

It belongs to the clathrin light chain family. In terms of assembly, clathrin coats are formed from molecules containing 3 heavy chains and 3 light chains. Interacts with CALY; the interaction stimulates clathrin self-assembly and clathrin-mediated endocytosis. Interacts with CKAP5 and TACC3 forming the TACC3/ch-TOG/clathrin complex located at spindle inter-microtubules bridges; the complex implicates clathrin triskelions.

The protein resides in the cytoplasmic vesicle membrane. The protein localises to the membrane. It localises to the coated pit. Its subcellular location is the cytoplasm. It is found in the cytoskeleton. The protein resides in the spindle. In terms of biological role, clathrin is the major protein of the polyhedral coat of coated pits and vesicles. Acts as a component of the TACC3/ch-TOG/clathrin complex proposed to contribute to stabilization of kinetochore fibers of the mitotic spindle by acting as inter-microtubule bridge. The sequence is that of Clathrin light chain A (CLTA) from Homo sapiens (Human).